We begin with the raw amino-acid sequence, 163 residues long: Photosystem II extrinsic protein V (163 aa).

The first 26 residues, 1–26 (MFRRLIGVVVATVLLSFQLLVGSATA), serve as a signal peptide directing secretion. Heme c is bound by residues Cys-63, Cys-66, His-67, and His-118.

It belongs to the cytochrome c family. PsbV subfamily. PSII is composed of 1 copy each of membrane proteins PsbA, PsbB, PsbC, PsbD, PsbE, PsbF, PsbH, PsbI, PsbJ, PsbK, PsbL, PsbM, PsbT, PsbX, PsbY, PsbZ, Psb30/Ycf12, peripheral proteins PsbO, CyanoQ (PsbQ), PsbU, PsbV and a large number of cofactors. It forms dimeric complexes. Requires heme c as cofactor.

Its subcellular location is the cellular thylakoid membrane. Functionally, one of the extrinsic, lumenal subunits of photosystem II (PSII). PSII is a light-driven water plastoquinone oxidoreductase, using light energy to abstract electrons from H(2)O, generating a proton gradient subsequently used for ATP formation. The extrinsic proteins stabilize the structure of photosystem II oxygen-evolving complex (OEC), the ion environment of oxygen evolution and protect the OEC against heat-induced inactivation. Low-potential cytochrome c that plays a role in the OEC of PSII. This Nostoc punctiforme (strain ATCC 29133 / PCC 73102) protein is Photosystem II extrinsic protein V.